The sequence spans 150 residues: MKSKRHLKILNIIKNEDISTQEELVERLHESGIDVTQATVSRDIKRLGLIKVPDGKGGYKYSLPNEKTYGDIISWLKKMFQDFVIDMDFSENIIVVQTMPGTAEGLGSAIDNAEIEGVIGTVAGDDTIMIVTKPIEKTPEIFNKLQDLLI.

It belongs to the ArgR family.

The protein localises to the cytoplasm. Its pathway is amino-acid biosynthesis; L-arginine biosynthesis [regulation]. In terms of biological role, regulates arginine biosynthesis genes. This is Arginine repressor from Halothermothrix orenii (strain H 168 / OCM 544 / DSM 9562).